Here is a 313-residue protein sequence, read N- to C-terminus: 2-phosphoglycerate kinase (313 aa).

The ATP-cone domain maps to 8–95 (SRILVTDKEY…LWRRVLKKHS (88 aa)).

It belongs to the 2-phosphoglycerate kinase family. A divalent metal cation is required as a cofactor.

The enzyme catalyses (2R)-2-phosphoglycerate + ATP = (2R)-2,3-bisphosphoglycerate + ADP + H(+). It functions in the pathway thermoadapter biosynthesis; cyclic 2,3-diphosphoglycerate biosynthesis; cyclic 2,3-diphosphoglycerate from 2-phospho-D-glycerate: step 1/2. Functionally, catalyzes the phosphorylation of 2-phosphoglycerate to 2,3-diphosphoglycerate. Involved in the biosynthesis of cyclic 2,3-bisphosphoglycerate, a thermoprotectant. The polypeptide is 2-phosphoglycerate kinase (Methanococcus maripaludis (strain C6 / ATCC BAA-1332)).